The sequence spans 360 residues: Phospho-N-acetylmuramoyl-pentapeptide-transferase (360 aa).

The next 10 membrane-spanning stretches (helical) occupy residues 27-47 (VMAV…LIRF), 71-91 (TPTM…LLWA), 98-118 (VWIV…DDYL), 142-162 (LVLA…TFVM), 168-188 (YMPY…VGSS), 199-219 (GLAI…AYLT), 236-256 (ASEL…FLWF), 263-283 (VFMG…IAVL), 288-308 (ILLV…ILQV), and 338-358 (VIVR…VTLK).

The protein belongs to the glycosyltransferase 4 family. MraY subfamily. Requires Mg(2+) as cofactor.

It localises to the cell inner membrane. The catalysed reaction is UDP-N-acetyl-alpha-D-muramoyl-L-alanyl-gamma-D-glutamyl-meso-2,6-diaminopimeloyl-D-alanyl-D-alanine + di-trans,octa-cis-undecaprenyl phosphate = di-trans,octa-cis-undecaprenyl diphospho-N-acetyl-alpha-D-muramoyl-L-alanyl-D-glutamyl-meso-2,6-diaminopimeloyl-D-alanyl-D-alanine + UMP. It functions in the pathway cell wall biogenesis; peptidoglycan biosynthesis. In terms of biological role, catalyzes the initial step of the lipid cycle reactions in the biosynthesis of the cell wall peptidoglycan: transfers peptidoglycan precursor phospho-MurNAc-pentapeptide from UDP-MurNAc-pentapeptide onto the lipid carrier undecaprenyl phosphate, yielding undecaprenyl-pyrophosphoryl-MurNAc-pentapeptide, known as lipid I. The polypeptide is Phospho-N-acetylmuramoyl-pentapeptide-transferase (Psychromonas ingrahamii (strain DSM 17664 / CCUG 51855 / 37)).